The primary structure comprises 448 residues: Porin AaxA (448 aa).

A signal peptide spans 1 to 24 (MASFRSSLLSALCAYGMMVMPAYA).

Belongs to the OprB family.

Its subcellular location is the cell outer membrane. Functionally, facilitates L-arginine uptake, as part of the AaxABC system. The arginine uptake by the bacterium in the macrophage may be a virulence factor against the host innate immune response. In Chlamydia abortus (strain DSM 27085 / S26/3) (Chlamydophila abortus), this protein is Porin AaxA (aaxA).